The sequence spans 240 residues: Dihydromonapterin reductase (240 aa).

Tyrosine 152 serves as the catalytic Proton acceptor.

This sequence belongs to the short-chain dehydrogenases/reductases (SDR) family. FolM subfamily.

The enzyme catalyses (6S)-5,6,7,8-tetrahydrofolate + NADP(+) = 7,8-dihydrofolate + NADPH + H(+). The catalysed reaction is 7,8-dihydromonapterin + NADPH + H(+) = 5,6,7,8-tetrahydromonapterin + NADP(+). Its function is as follows. Catalyzes the reduction of dihydromonapterin to tetrahydromonapterin. Also has lower activity with dihydrofolate. The protein is Dihydromonapterin reductase (folM) of Escherichia coli O139:H28 (strain E24377A / ETEC).